Consider the following 304-residue polypeptide: Large ribosomal subunit protein uL2m (304 aa).

The N-terminal 60 residues, 1 to 60 (MALCALASALRSLSLASPAITARVPTLLPVGQSNVLLQLPSALALPAHRPVHMSADRSAK), are a transit peptide targeting the mitochondrion.

This sequence belongs to the universal ribosomal protein uL2 family. Component of the mitochondrial ribosome large subunit (39S) which comprises a 16S rRNA and about 50 distinct proteins.

It is found in the mitochondrion. The polypeptide is Large ribosomal subunit protein uL2m (Mrpl2) (Rattus norvegicus (Rat)).